The following is a 336-amino-acid chain: GTPase Obg (336 aa).

One can recognise an Obg domain in the interval 1-159 (MKFLDQAKIY…RWVWLRLKLI (159 aa)). In terms of domain architecture, OBG-type G spans 160–328 (ADIGLVGLPN…LLRLLQDRVT (169 aa)). GTP is bound by residues 166-173 (GLPNAGKS), 191-195 (FTTLH), 213-216 (DIPG), 280-283 (NKCD), and 309-311 (SGA). Positions 173 and 193 each coordinate Mg(2+).

Belongs to the TRAFAC class OBG-HflX-like GTPase superfamily. OBG GTPase family. As to quaternary structure, monomer. Mg(2+) serves as cofactor.

The protein resides in the cytoplasm. In terms of biological role, an essential GTPase which binds GTP, GDP and possibly (p)ppGpp with moderate affinity, with high nucleotide exchange rates and a fairly low GTP hydrolysis rate. Plays a role in control of the cell cycle, stress response, ribosome biogenesis and in those bacteria that undergo differentiation, in morphogenesis control. The sequence is that of GTPase Obg from Gluconobacter oxydans (strain 621H) (Gluconobacter suboxydans).